A 141-amino-acid chain; its full sequence is Hemoglobin subunit alpha-A (141 aa).

Positions Val-1–Arg-141 constitute a Globin domain. Position 58 (His-58) interacts with O2. Residue His-87 participates in heme b binding.

It belongs to the globin family. In terms of assembly, heterotetramer of two alpha chains and two beta chains. As to expression, red blood cells.

In terms of biological role, involved in oxygen transport from the lung to the various peripheral tissues. The polypeptide is Hemoglobin subunit alpha-A (HBAA) (Caretta caretta (Loggerhead sea turtle)).